The following is a 341-amino-acid chain: 4-hydroxy-2-oxovalerate aldolase (341 aa).

In terms of domain architecture, Pyruvate carboxyltransferase spans 9–260; the sequence is VVITDSTLRD…ATGIDLYRVL (252 aa). 17-18 lines the substrate pocket; the sequence is RD. D18 lines the Mn(2+) pocket. The Proton acceptor role is filled by H21. Residues S172 and H199 each contribute to the substrate site. 2 residues coordinate Mn(2+): H199 and H201.

The protein belongs to the 4-hydroxy-2-oxovalerate aldolase family.

It carries out the reaction (S)-4-hydroxy-2-oxopentanoate = acetaldehyde + pyruvate. The polypeptide is 4-hydroxy-2-oxovalerate aldolase (Spirochaeta aurantia).